A 359-amino-acid chain; its full sequence is MKTRSSDAEGDSRGKMIAPVGEGNGGRKRKLVQSNEQKNDIQREEDGRAKRRIVQSSDQKNGKILRGIRGCVSPRCSAQTYQSRFSWYEQDIWTYISRFLDGKSLVKLGATNKWFYKIAMEDTVWRFACLRDLQVPVPFPVSSTWIKIYASAFDGSHSYLFRQKEKHIDWMRIGAFVLDSRTSLLTESLSGRLKFPREGTIERMLQSSGSCLINDIKSGIWIADLQLVRCPVCDLSTCDGTMQTLDARHIELFLSEGYKDGSWDYNLIGSHKLQKNASAACGAIFDLKHLKESSYSGILNLKSWTGESNDSQPKAVIAPHAVAVHTRLQENEGILVKYHTMKAGTDGDIVSIRISQQLL.

2 stretches are compositionally biased toward basic and acidic residues: residues 1–14 (MKTR…DSRG) and 37–48 (QKNDIQREEDGR). A disordered region spans residues 1-60 (MKTRSSDAEGDSRGKMIAPVGEGNGGRKRKLVQSNEQKNDIQREEDGRAKRRIVQSSDQK). Residues 82 to 128 (QSRFSWYEQDIWTYISRFLDGKSLVKLGATNKWFYKIAMEDTVWRFA) enclose the F-box; degenerate domain.

In terms of assembly, interacts with SKP1A. In terms of tissue distribution, expressed in flower buds, developing anthers, pollen grains, siliques, rosette leaves and roots. Detected at lower levels in open flowers, stems and cauline leaves. Expressed in young seedling in the hydathodes, shoot apical meristem, root tips and lateral root primordia.

Its subcellular location is the nucleus. In terms of biological role, regulates tapetum degeneration and pollen maturation during anther development. The chain is Probable F-box protein At3g61730 (RMF) from Arabidopsis thaliana (Mouse-ear cress).